A 469-amino-acid polypeptide reads, in one-letter code: UDP-N-acetylmuramoylalanine--D-glutamate ligase (469 aa).

Residue 125–131 participates in ATP binding; sequence GTNGKTT.

Belongs to the MurCDEF family.

It is found in the cytoplasm. It catalyses the reaction UDP-N-acetyl-alpha-D-muramoyl-L-alanine + D-glutamate + ATP = UDP-N-acetyl-alpha-D-muramoyl-L-alanyl-D-glutamate + ADP + phosphate + H(+). The protein operates within cell wall biogenesis; peptidoglycan biosynthesis. Its function is as follows. Cell wall formation. Catalyzes the addition of glutamate to the nucleotide precursor UDP-N-acetylmuramoyl-L-alanine (UMA). This is UDP-N-acetylmuramoylalanine--D-glutamate ligase from Prochlorococcus marinus (strain NATL2A).